Reading from the N-terminus, the 317-residue chain is UV DNA damage endonuclease (317 aa).

It belongs to the uve1/UvsE family.

Functionally, component in a DNA repair pathway. Removal of UV LIGHT damaged nucleotides. Recognizes pyrimidine dimers and cleave a phosphodiester bond immediately 5' to the lesion. This is UV DNA damage endonuclease from Bacillus thuringiensis subsp. konkukian (strain 97-27).